A 196-amino-acid polypeptide reads, in one-letter code: Small ribosomal subunit protein uS4c (196 aa).

The disordered stretch occupies residues 17 to 36 (ALPGLTRKTPKSGSNLKKKF). The 62-residue stretch at 89-150 (MRLDNILFRL…NQRSKRLIQN (62 aa)) folds into the S4 RNA-binding domain.

Belongs to the universal ribosomal protein uS4 family. Part of the 30S ribosomal subunit. Contacts protein S5. The interaction surface between S4 and S5 is involved in control of translational fidelity.

It is found in the plastid. The protein resides in the chloroplast. Its function is as follows. One of the primary rRNA binding proteins, it binds directly to 16S rRNA where it nucleates assembly of the body of the 30S subunit. With S5 and S12 plays an important role in translational accuracy. The protein is Small ribosomal subunit protein uS4c (rps4) of Phyllostachys flexuosa (Drooping timber bamboo).